Reading from the N-terminus, the 86-residue chain is Putative membrane protein insertion efficiency factor (86 aa).

The protein belongs to the UPF0161 family.

The protein localises to the cell inner membrane. Could be involved in insertion of integral membrane proteins into the membrane. The sequence is that of Putative membrane protein insertion efficiency factor from Mannheimia succiniciproducens (strain KCTC 0769BP / MBEL55E).